The sequence spans 83 residues: MFLVDDLLVNPFLSLLDILHTMALDEMNDMEEIRDEIKENQLLYEIGERSETDYQQRKQQLEARLETAERIQAQMQGRIEVKR.

The protein belongs to the gas vesicle GvpG family. GvpF to GvpM interact with each other in vitro, and may form multi-subunit complex(es).

The protein localises to the gas vesicle. Functionally, proteins GvpF to GvpM might be involved in nucleating gas vesicle formation. A minor component of the gas vesicle. Gas vesicles are hollow, gas filled proteinaceous nanostructures found in some microorganisms. They allow positioning of halobacteria at the optimal depth for growth in the poorly aerated, shallow brine pools of their habitat. In terms of biological role, expression of a 9.5 kb mc-vac DNA fragment containing 2 divergently transcribed regions (gvpD-gvpE-gvpF-gvpG-gvpH-gvpI-gvpJ-gvpK-gvpL-gvpM and gvpA-gvpC-gvpN-gvpO) allows H.volcanii to produce gas vesicles. This is Gas vesicle protein G from Haloferax mediterranei (strain ATCC 33500 / DSM 1411 / JCM 8866 / NBRC 14739 / NCIMB 2177 / R-4) (Halobacterium mediterranei).